We begin with the raw amino-acid sequence, 354 residues long: Fructose-bisphosphate aldolase (354 aa).

Residue S61 participates in D-glyceraldehyde 3-phosphate binding. The Proton donor role is filled by D104. Positions 105, 139, 169, and 221 each coordinate Zn(2+). G222 contacts dihydroxyacetone phosphate. H260 provides a ligand contact to Zn(2+). Residues 261-263 and 282-285 each bind dihydroxyacetone phosphate; these read GGS and NIDT.

Belongs to the class II fructose-bisphosphate aldolase family. As to quaternary structure, homodimer. Zn(2+) serves as cofactor.

It catalyses the reaction beta-D-fructose 1,6-bisphosphate = D-glyceraldehyde 3-phosphate + dihydroxyacetone phosphate. It participates in carbohydrate degradation; glycolysis; D-glyceraldehyde 3-phosphate and glycerone phosphate from D-glucose: step 4/4. In terms of biological role, catalyzes the aldol condensation of dihydroxyacetone phosphate (DHAP or glycerone-phosphate) with glyceraldehyde 3-phosphate (G3P) to form fructose 1,6-bisphosphate (FBP) in gluconeogenesis and the reverse reaction in glycolysis. The sequence is that of Fructose-bisphosphate aldolase (fba) from Campylobacter jejuni subsp. jejuni serotype O:2 (strain ATCC 700819 / NCTC 11168).